Reading from the N-terminus, the 303-residue chain is Mitochondrial carrier homolog 2 (303 aa).

An N-acetylalanine modification is found at A2. The Mitochondrial intermembrane segment spans residues A2–T15. Solcar repeat units lie at residues A2 to S98 and D118 to Y206. The helical transmembrane segment at I16–P36 threads the bilayer. Over P37–R77 the chain is Cytoplasmic. Residues L78–L92 traverse the membrane as a helical segment. Residues Q93–T135 lie on the Mitochondrial intermembrane side of the membrane. The helical transmembrane segment at L136–E156 threads the bilayer. At S157–A180 the chain is on the cytoplasmic side. The chain crosses the membrane as a helical span at residues G181 to L199. Residues A200–S231 are Mitochondrial intermembrane-facing. Residues M232–A252 form a helical membrane-spanning segment. Residues G253–R280 are Cytoplasmic-facing. A helical membrane pass occupies residues G281 to I303.

It belongs to the mitochondrial carrier (TC 2.A.29) family. As to quaternary structure, interacts with p15BID. As to expression, expressed in a wide variety of tissues. Predominant expressed in liver, kidney, heart, skeletal muscle and testis.

Its subcellular location is the mitochondrion outer membrane. Functionally, protein insertase that mediates insertion of transmembrane proteins into the mitochondrial outer membrane. Catalyzes insertion of proteins with alpha-helical transmembrane regions, such as signal-anchored, tail-anchored and multi-pass membrane proteins. Does not mediate insertion of beta-barrel transmembrane proteins. Also acts as a receptor for the truncated form of pro-apoptotic BH3-interacting domain death agonist (p15 BID) and has therefore a critical function in apoptosis. Regulates the quiescence/cycling of hematopoietic stem cells (HSCs). Acts as a regulator of mitochondrial fusion, essential for the naive-to-primed interconversion of embryonic stem cells (ESCs). Acts as a regulator of lipid homeostasis and has a regulatory role in adipocyte differentiation and biology. In Mus musculus (Mouse), this protein is Mitochondrial carrier homolog 2.